The primary structure comprises 308 residues: Extended-spectrum beta-lactamase PER-1 (308 aa).

Positions 1 to 26 (MNVIIKAVVTASTLLMVSFSSFETSA) are cleaved as a signal peptide. Residue serine 71 is the Nucleophile; acyl-ester intermediate of the active site. A beta-lactam-binding residues include lysine 74, serine 135, and glutamate 171.

It belongs to the class-A beta-lactamase family. In terms of assembly, monomer.

It localises to the secreted. It catalyses the reaction a beta-lactam + H2O = a substituted beta-amino acid. Inhibited by the beta-lactamase-blocking agents clavulanic acid, tazobactam and sulbactam. Not inhibited by EDTA. Its function is as follows. Extended-spectrum beta-lactamase (ESBL) which confers resistance to penicillins, as well as first-, second- and third-generation cephalosporins, but not the carbapenem, imipenem, in the JM109 strain of E.coli. Has cefotaxime-hydrolyzing activity. This is Extended-spectrum beta-lactamase PER-1 from Pseudomonas aeruginosa.